Reading from the N-terminus, the 335-residue chain is Pyruvate dehydrogenase E1 component subunit beta (335 aa).

E60 contacts thiamine diphosphate. Positions 161, 162, and 166 each coordinate K(+).

As to quaternary structure, heterodimer of an alpha and a beta chain. Requires thiamine diphosphate as cofactor.

It is found in the plastid. The protein localises to the chloroplast. The enzyme catalyses N(6)-[(R)-lipoyl]-L-lysyl-[protein] + pyruvate + H(+) = N(6)-[(R)-S(8)-acetyldihydrolipoyl]-L-lysyl-[protein] + CO2. The pyruvate dehydrogenase complex catalyzes the overall conversion of pyruvate to acetyl-CoA and CO(2). It contains multiple copies of three enzymatic components: pyruvate dehydrogenase (E1), dihydrolipoamide acetyltransferase (E2) and lipoamide dehydrogenase (E3). The polypeptide is Pyruvate dehydrogenase E1 component subunit beta (pdhB) (Chlorokybus atmophyticus (Soil alga)).